We begin with the raw amino-acid sequence, 134 residues long: Small ribosomal subunit protein uS9 (134 aa).

Positions 114 to 134 (QKEAKNFGGPGARSKYQKSYR) are disordered.

This sequence belongs to the universal ribosomal protein uS9 family.

In Methanosarcina mazei (strain ATCC BAA-159 / DSM 3647 / Goe1 / Go1 / JCM 11833 / OCM 88) (Methanosarcina frisia), this protein is Small ribosomal subunit protein uS9.